A 900-amino-acid polypeptide reads, in one-letter code: MGSNKEAKNIDSKNDRGLTSITSNKISNLKAHDNHTSSMITEHKNADKEKGKQEKESRNGTTQSSSSVESHSPQVSHHSDKLSSFDSPLHLPNFRLADDLFSNSSRRSSDSAASSSVSKLKSAQLSKIGLHHHHTSNNKHSHRSGTPTSEVKANYSPDPSAPRFIVSNMVGNGRGGGGLHGATSNVVKKLHSRKKWDWNTLPASDSSLLIKTVSGNHNLINICIDGEFKQIMYDPNHNELFNRMDLFLSFNMDSSPEDSLIFAKKRLRSYIDFLTKYLESRKYAFECYPFNIENIINIETEVKCFPSFDPLKDYSEIESLIQLWLAQSQKFLLQSNSFFFSSEVVEELIKRKPTTRQHSNPTISTTSNKISDPTLYIQQLDIEANSPRPVISDPLDEIDILLIRPLHKTLGGWQLAYDEPSLNIADFALDLSPWMIDSSDNDAQNKNASEIAPEYLTNLQNYLPRKGSRAKIVSDEQEVIELNSSNASEYMYDCMNRKFFTDDAKERISRNNFNQGVEEDPLNDQFASSRSLSLPSSGADAVKRKKSPTKATKKSGFVNFFKRKHSQLASTSHTTSPSVSPSISSSSSPKIQPQSHISSPPRTEKAPHVKSANQAHQNEWLENFFCRTLNNYKEIDLPTQFILPKEVKRSSNAQLQPEDEPPLSSPISSNSDNSFPNEGLDRAKSAAIYGKEYLKLRLPFASDTIPAVICPWVWTSLSYYKWKALLREIYRSIIPGGYALAIVPDLRISNTYYTGILGNADAEKANNSSEEFLTTKERDKTFDAMAIDAINKGLHIHPTKHLTRTFKDVGFTGIKSSVLSLKTGDFKTDMGFLNEFNSLDMWDYMLRRQLPDSSCPPKDTDPTTLFKRYVEEHIGKIDDNAGCFRTLYVVAQKPKLPYTK.

Residues 1–16 (MGSNKEAKNIDSKNDR) are compositionally biased toward basic and acidic residues. 5 disordered regions span residues 1 to 84 (MGSN…KLSS), 103 to 160 (NSSR…PDPS), 512 to 556 (NFNQ…KKSG), 568 to 613 (LAST…KSAN), and 648 to 676 (KRSSNAQLQPEDEPPLSSPISSNSDNSFP). Positions 17 to 27 (GLTSITSNKIS) are enriched in polar residues. Residues 30 to 58 (KAHDNHTSSMITEHKNADKEKGKQEKESR) are compositionally biased toward basic and acidic residues. Composition is skewed to low complexity over residues 63-76 (QSSSSVESHSPQVS) and 103-127 (NSSRRSSDSAASSSVSKLKSAQLSK). A Phosphoserine modification is found at Ser105. Basic residues predominate over residues 129–143 (GLHHHHTSNNKHSHR). Over residues 528–537 (SSRSLSLPSS) the composition is skewed to low complexity. Over residues 543-553 (KRKKSPTKATK) the composition is skewed to basic residues. Low complexity-rich tracts occupy residues 570–601 (STSHTTSPSVSPSISSSSSPKIQPQSHISSPP) and 665–676 (SPISSNSDNSFP).

This is an uncharacterized protein from Saccharomyces cerevisiae (strain ATCC 204508 / S288c) (Baker's yeast).